We begin with the raw amino-acid sequence, 312 residues long: Ornithine carbamoyltransferase, catabolic (312 aa).

Carbamoyl phosphate is bound by residues 57 to 60 (STRT), Gln-84, Arg-108, and 135 to 138 (HPTQ). Residues Asn-167, Asp-231, and 235-236 (SM) contribute to the L-ornithine site. Residue 272-273 (CL) participates in carbamoyl phosphate binding.

It belongs to the aspartate/ornithine carbamoyltransferase superfamily. OTCase family.

The protein localises to the cytoplasm. The enzyme catalyses carbamoyl phosphate + L-ornithine = L-citrulline + phosphate + H(+). Its pathway is amino-acid degradation; L-arginine degradation via ADI pathway; carbamoyl phosphate from L-arginine: step 2/2. Its function is as follows. Reversibly catalyzes the transfer of the carbamoyl group from carbamoyl phosphate (CP) to the N(epsilon) atom of ornithine (ORN) to produce L-citrulline. The chain is Ornithine carbamoyltransferase, catabolic (arcB) from Mycoplasma capricolum subsp. capripneumoniae.